A 166-amino-acid chain; its full sequence is MTETTEALENPDNPDAETAAAEVTEAPVEAVPAESYVFERPIQTVGRRKEAVVRVRLVPGTGKFNLNGRTLEGYFPNKVHQQLIKAPLVTVDRVDSFDIYAHLHGGGPSGQAGALRLGIARALILASPDDRPALKKAGFLTRDPRATERKKYGLKKARKAPQYSKR.

The disordered stretch occupies residues lysine 135–arginine 166. Positions arginine 142–lysine 151 are enriched in basic and acidic residues. The segment covering tyrosine 152–arginine 166 has biased composition (basic residues).

It belongs to the universal ribosomal protein uS9 family.

The polypeptide is Small ribosomal subunit protein uS9 (Mycobacterium avium (strain 104)).